A 471-amino-acid polypeptide reads, in one-letter code: Bifunctional protein GlmU (471 aa).

Residues 1–235 form a pyrophosphorylase region; it reads MVAVAILAAG…YQEIFGINNR (235 aa). UDP-N-acetyl-alpha-D-glucosamine contacts are provided by residues 7 to 10, lysine 21, glutamine 82, and 87 to 88; these read LAAG and GT. Residue aspartate 112 participates in Mg(2+) binding. The UDP-N-acetyl-alpha-D-glucosamine site is built by glycine 149, glutamate 164, asparagine 179, and asparagine 233. A Mg(2+)-binding site is contributed by asparagine 233. Positions 236 to 256 are linker; it reads KHLAKAHEILQVRVKDDWMEA. Residues 257–471 form an N-acetyltransferase region; sequence GVTLIDPDSI…SKKEENKSSP (215 aa). Residues arginine 338 and lysine 356 each coordinate UDP-N-acetyl-alpha-D-glucosamine. The active-site Proton acceptor is the histidine 368. UDP-N-acetyl-alpha-D-glucosamine is bound by residues tyrosine 371 and asparagine 382. Residues alanine 385, 391–392, serine 410, alanine 428, and arginine 445 contribute to the acetyl-CoA site; that span reads NY.

It in the N-terminal section; belongs to the N-acetylglucosamine-1-phosphate uridyltransferase family. This sequence in the C-terminal section; belongs to the transferase hexapeptide repeat family. As to quaternary structure, homotrimer. Requires Mg(2+) as cofactor.

It localises to the cytoplasm. It carries out the reaction alpha-D-glucosamine 1-phosphate + acetyl-CoA = N-acetyl-alpha-D-glucosamine 1-phosphate + CoA + H(+). The catalysed reaction is N-acetyl-alpha-D-glucosamine 1-phosphate + UTP + H(+) = UDP-N-acetyl-alpha-D-glucosamine + diphosphate. The protein operates within nucleotide-sugar biosynthesis; UDP-N-acetyl-alpha-D-glucosamine biosynthesis; N-acetyl-alpha-D-glucosamine 1-phosphate from alpha-D-glucosamine 6-phosphate (route II): step 2/2. Its pathway is nucleotide-sugar biosynthesis; UDP-N-acetyl-alpha-D-glucosamine biosynthesis; UDP-N-acetyl-alpha-D-glucosamine from N-acetyl-alpha-D-glucosamine 1-phosphate: step 1/1. It functions in the pathway bacterial outer membrane biogenesis; LPS lipid A biosynthesis. Its function is as follows. Catalyzes the last two sequential reactions in the de novo biosynthetic pathway for UDP-N-acetylglucosamine (UDP-GlcNAc). The C-terminal domain catalyzes the transfer of acetyl group from acetyl coenzyme A to glucosamine-1-phosphate (GlcN-1-P) to produce N-acetylglucosamine-1-phosphate (GlcNAc-1-P), which is converted into UDP-GlcNAc by the transfer of uridine 5-monophosphate (from uridine 5-triphosphate), a reaction catalyzed by the N-terminal domain. This chain is Bifunctional protein GlmU, found in Trichodesmium erythraeum (strain IMS101).